The primary structure comprises 98 residues: Integration host factor subunit alpha (98 aa).

Positions 50-71 (GNFDLRDKNQRPGRNPKTGEDI) are disordered.

Belongs to the bacterial histone-like protein family. In terms of assembly, heterodimer of an alpha and a beta chain.

In terms of biological role, this protein is one of the two subunits of integration host factor, a specific DNA-binding protein that functions in genetic recombination as well as in transcriptional and translational control. The chain is Integration host factor subunit alpha from Proteus mirabilis (strain HI4320).